Consider the following 175-residue polypeptide: Probable DNA replication complex GINS protein PSF2 (175 aa).

It belongs to the GINS2/PSF2 family. In terms of assembly, component of the GINS complex which is a heterotetramer of SLD5, PSF1, PSF2 and PSF3.

It is found in the nucleus. The GINS complex plays an essential role in the initiation of DNA replication. This is Probable DNA replication complex GINS protein PSF2 from Encephalitozoon cuniculi (strain GB-M1) (Microsporidian parasite).